The sequence spans 819 residues: Lysine-specific demethylase JMJ18 (819 aa).

A disordered region spans residues 1–39 (MENPPLESEIKEDMSLKNHPPDKDKDKDTIMEQPSSPRH). Residues 8–30 (SEIKEDMSLKNHPPDKDKDKDTI) show a composition bias toward basic and acidic residues. The 42-residue stretch at 59–100 (APVFTPSLEEFVDPLAYIEKIRPLAEPYGICRIIPPSTWKPP) folds into the JmjN domain. The tract at residues 120 to 171 (TVDLLQNREPMKKKPKSRKRKRRRNSRMGSSKRRSGSSPAESTSSPEAEEKF) is disordered. The Nuclear localization signal motif lies at 130–137 (MKKKPKSR). The segment covering 130 to 154 (MKKKPKSRKRKRRRNSRMGSSKRRS) has biased composition (basic residues). Low complexity predominate over residues 155 to 165 (GSSPAESTSSP). Residues 261–427 (QYTLSGWNLN…HGQNAVELYS (167 aa)) form the JmjC domain. Fe cation contacts are provided by H307, E309, and H395. Residues C519, C522, C533, C535, C542, H545, C550, and C552 each contribute to the Zn(2+) site. Residues 519–571 (CFSCFYDLHLSASGCKCSPEEYACLKHADDLCSCDVKDGFILLRYTMDELSSL) form a C5HC2 zinc finger. The region spanning 644–702 (ASENLGVSVEPINLGFLIFGKLWCNKYAIFPKGFRSRVKFYNVLDPTRMSNYISEVLDA) is the FYR N-terminal domain. The FYR C-terminal domain occupies 704-788 (LMGPLFRVTL…HRLVEYWNHK (85 aa)).

The protein belongs to the JARID1 histone demethylase family. It depends on Fe(2+) as a cofactor. Expressed in vascular tissues of roots, cotyledons, leaves and flowers. Expressed predominantly in phloem companion cells of roots. Present in inflorescences, roots, siliques, leaves and stems.

Its subcellular location is the nucleus. It catalyses the reaction N(6),N(6),N(6)-trimethyl-L-lysyl(4)-[histone H3] + 2-oxoglutarate + O2 = N(6),N(6)-dimethyl-L-lysyl(4)-[histone H3] + formaldehyde + succinate + CO2. The enzyme catalyses N(6),N(6)-dimethyl-L-lysyl(4)-[histone H3] + 2-oxoglutarate + O2 = N(6)-methyl-L-lysyl(4)-[histone H3] + formaldehyde + succinate + CO2. Functionally, histone demethylase that demethylates 'Lys-4' (H3K4me) of histone H3 with a specific activity for H3K4me3 and H3K4me2. No activity on H3K9me3/2, H3K27me3/2 and H3K36me3/2. Involved in the control of flowering time by demethylating H3K4me3 at the FLC locus and repressing its expression. The repression of FLC level and reduction in H3K4me3 at the FLC locus results in induction of the flowering activator FT, which is a downstream target of FLC. This Arabidopsis thaliana (Mouse-ear cress) protein is Lysine-specific demethylase JMJ18.